Reading from the N-terminus, the 484-residue chain is Glycogen synthase (484 aa).

Lysine 15 provides a ligand contact to ADP-alpha-D-glucose.

This sequence belongs to the glycosyltransferase 1 family. Bacterial/plant glycogen synthase subfamily.

It carries out the reaction [(1-&gt;4)-alpha-D-glucosyl](n) + ADP-alpha-D-glucose = [(1-&gt;4)-alpha-D-glucosyl](n+1) + ADP + H(+). Its pathway is glycan biosynthesis; glycogen biosynthesis. Synthesizes alpha-1,4-glucan chains using ADP-glucose. This Koribacter versatilis (strain Ellin345) protein is Glycogen synthase.